Consider the following 120-residue polypeptide: Glycine cleavage system H protein (120 aa).

Residues 17–99 (IATVGITSHA…QGAGWFFKLK (83 aa)) enclose the Lipoyl-binding domain. K58 is subject to N6-lipoyllysine.

This sequence belongs to the GcvH family. As to quaternary structure, the glycine cleavage system is composed of four proteins: P, T, L and H. (R)-lipoate is required as a cofactor.

Its function is as follows. The glycine cleavage system catalyzes the degradation of glycine. The H protein shuttles the methylamine group of glycine from the P protein to the T protein. The polypeptide is Glycine cleavage system H protein (Agrobacterium fabrum (strain C58 / ATCC 33970) (Agrobacterium tumefaciens (strain C58))).